Reading from the N-terminus, the 444-residue chain is C4-dicarboxylate transport protein (444 aa).

A run of 8 helical transmembrane segments spans residues 19 to 39, 55 to 75, 90 to 110, 161 to 181, 199 to 219, 230 to 250, 343 to 363, and 366 to 386; these read HLYFQVIVAIIGGILLGHFYP, LVKMVIAPVIFLTVATGIAGM, IYFLCFSTLALVVGMLVSNIL, ILQVLFFSVLFGLALAMVGDL, LVAILMKAAPIGAFGAMAFTI, LAFLIGTFYLTSLLFVLVVLG, LLLVAMLSSKGAAGITGAGFI, and AATLSVVPSVPVAGMALILGI.

It belongs to the dicarboxylate/amino acid:cation symporter (DAACS) (TC 2.A.23) family.

It is found in the cell inner membrane. Functionally, responsible for the transport of dicarboxylates such as succinate, fumarate, and malate from the periplasm across the membrane. The polypeptide is C4-dicarboxylate transport protein (Allorhizobium ampelinum (strain ATCC BAA-846 / DSM 112012 / S4) (Agrobacterium vitis (strain S4))).